A 635-amino-acid polypeptide reads, in one-letter code: Leucine-rich repeat and fibronectin type-III domain-containing protein 4 (635 aa).

The signal sequence occupies residues 1–16; the sequence is MAPPLLLLLLASGAAA. The LRRNT domain maps to 17 to 48; it reads CPLPCVCQNLSESLSTLCAHRGLLFVPPNVDR. The Extracellular portion of the chain corresponds to 17–518; that stretch reads CPLPCVCQNL…LQAHVLGGTL (502 aa). 2 N-linked (GlcNAc...) asparagine glycosylation sites follow: asparagine 25 and asparagine 70. 7 LRR repeats span residues 49–70, 73–94, 97–118, 121–142, 146–161, 170–191, and 194–215; these read RTVE…DFRN, GLVD…AFGD, SLRS…SLRG, NLQH…AFDD, SLED…RQVP, ALHT…AFAQ, and QLSR…PLFS. The LRRCT domain maps to 234 to 280; it reads NPLHCNCELLWLRRLARPDDLETCASPPGLAGRYFWAVPEGEFSCEP. The region spanning 281–367 is the Ig-like domain; it reads PLIARHTQRL…GEATARVELR (87 aa). A disulfide bridge links cysteine 302 with cysteine 351. Asparagine 324, asparagine 333, asparagine 376, and asparagine 440 each carry an N-linked (GlcNAc...) asparagine glycan. The disordered stretch occupies residues 373–410; that stretch reads HGGNSSAEGGRPGPSDIAASARTAAEGEGTLESEPAVQ. The 98-residue stretch at 405 to 502 folds into the Fibronectin type-III domain; sequence SEPAVQVTEV…GCAHFSTLPA (98 aa). A helical transmembrane segment spans residues 519–539; sequence TVAVGGVLVAALLVFTVALLV. Topologically, residues 540–635 are cytoplasmic; it reads RGRGAGNGRL…SAERLEESVV (96 aa). A disordered region spans residues 555–583; that stretch reads HVQSQTNGGPSPTPKAHPPRSPPPRPQRS. Residues 565-580 are compositionally biased toward pro residues; that stretch reads SPTPKAHPPRSPPPRP. Serine 585 and serine 626 each carry phosphoserine. A PDZ-binding motif is present at residues 632–635; it reads ESVV.

The protein belongs to the LRFN family. In terms of assembly, can form heteromeric complexes with LRFN1, LRFN2, LRFN3 and LRFN5. Unable to form homophilic interactions across cell junctions. Interacts with DLG1, DLG2, DLG3 and DLG4. Post-translationally, glycosylated.

The protein localises to the membrane. Promotes neurite outgrowth in hippocampal neurons. May play a role in redistributing DLG4 to the cell periphery. This is Leucine-rich repeat and fibronectin type-III domain-containing protein 4 (LRFN4) from Homo sapiens (Human).